A 61-amino-acid polypeptide reads, in one-letter code: Small ribosomal subunit protein uS14 (61 aa).

4 residues coordinate Zn(2+): C24, C27, C40, and C43.

The protein belongs to the universal ribosomal protein uS14 family. Zinc-binding uS14 subfamily. In terms of assembly, part of the 30S ribosomal subunit. Contacts proteins S3 and S10. Zn(2+) is required as a cofactor.

In terms of biological role, binds 16S rRNA, required for the assembly of 30S particles and may also be responsible for determining the conformation of the 16S rRNA at the A site. The sequence is that of Small ribosomal subunit protein uS14 from Moorella thermoacetica (strain ATCC 39073 / JCM 9320).